Here is a 180-residue protein sequence, read N- to C-terminus: MAAEEKDPLSYFAAYGSSSSDSSDENSEPEDAGRKEAASAPTTGGRGKQAEKRLPGPDELFRSVTRPAFLYNPLNKQIDWERHVVKAPEEPPKEFKIWKSNCVPPPETYTTEKKPPPPELDMAIKWSNIYEDNGDDAPQNAKKARLLPEGEETVESDDDKDERASKIRRVEPGEAAKKKK.

Disordered stretches follow at residues 1–66 (MAAE…SVTR) and 96–180 (KIWK…KKKK). The span at 48–61 (KQAEKRLPGPDELF) shows a compositional bias: basic and acidic residues. Phosphothreonine is present on threonine 65. At tyrosine 130 the chain carries Phosphotyrosine. Residues 149-160 (EGEETVESDDDK) show a composition bias toward acidic residues. Serine 156 is subject to Phosphoserine. Positions 161–180 (DERASKIRRVEPGEAAKKKK) are enriched in basic and acidic residues.

It belongs to the UPF0690 family.

The protein is UPF0690 protein C1orf52 homolog of Mus musculus (Mouse).